The chain runs to 383 residues: Glutaminyl-peptide cyclotransferase-like protein (383 aa).

Residues 1–25 (MPSGGRGRPRLQVGERSLLERPSPP) form a disordered region. A helical membrane pass occupies residues 35 to 57 (LLPQLLLALTVASVFYTIWRIWH). A disulfide bond links cysteine 168 and cysteine 192. Aspartate 187 lines the Zn(2+) pocket. Residue glutamate 226 is the Proton acceptor of the active site. Glutamate 227 contributes to the Zn(2+) binding site. Aspartate 270 acts as the Proton acceptor in catalysis. Histidine 352 serves as a coordination point for Zn(2+).

This sequence belongs to the glutaminyl-peptide cyclotransferase family.

It localises to the golgi apparatus membrane. The catalysed reaction is N-terminal L-glutaminyl-[peptide] = N-terminal 5-oxo-L-prolyl-[peptide] + NH4(+). Its function is as follows. Responsible for the biosynthesis of pyroglutamyl peptides. The protein is Glutaminyl-peptide cyclotransferase-like protein (QPCTL) of Bos taurus (Bovine).